We begin with the raw amino-acid sequence, 470 residues long: Neuraminidase (470 aa).

Residues 1-14 (MNPNQKIIAIGSAS) are Intravirion-facing. The involved in apical transport and lipid raft association stretch occupies residues 11 to 32 (GSASLGILILNVILHVVSIIVT). A helical transmembrane segment spans residues 15–35 (LGILILNVILHVVSIIVTVLV). Residues 32-86 (TVLVLNNNGTGLYCNGTIIREYNETVRVERITQWYNTNTIEYIERPSNEYYMNNT) are hypervariable stalk region. Residues 36 to 470 (LNNNGTGLYC…AILPFDIDKM (435 aa)) lie on the Virion surface side of the membrane. N39, N46, N54, and N84 each carry an N-linked (GlcNAc...) asparagine; by host glycan. Residues 89-470 (LCEAQGFAPF…AILPFDIDKM (382 aa)) form a head of neuraminidase region. Intrachain disulfides connect C90–C417, C122–C127, C182–C229, C231–C236, C277–C290, C279–C288, C316–C335, and C421–C446. R116 contributes to the substrate binding site. N-linked (GlcNAc...) asparagine; by host glycosylation occurs at N144. The active-site Proton donor/acceptor is D149. R150 is a binding site for substrate. 275–276 (EE) contributes to the substrate binding site. A substrate-binding site is contributed by R291. A Ca(2+)-binding site is contributed by D292. The N-linked (GlcNAc...) asparagine; by host glycan is linked to N293. The Ca(2+) site is built by G296 and D322. R368 lines the substrate pocket. N398 is a glycosylation site (N-linked (GlcNAc...) asparagine; by host). The active-site Nucleophile is the Y402.

This sequence belongs to the glycosyl hydrolase 34 family. As to quaternary structure, homotetramer. It depends on Ca(2+) as a cofactor. N-glycosylated.

The protein resides in the virion membrane. It localises to the host apical cell membrane. The catalysed reaction is Hydrolysis of alpha-(2-&gt;3)-, alpha-(2-&gt;6)-, alpha-(2-&gt;8)- glycosidic linkages of terminal sialic acid residues in oligosaccharides, glycoproteins, glycolipids, colominic acid and synthetic substrates.. Inhibited by the neuraminidase inhibitors zanamivir (Relenza) and oseltamivir (Tamiflu). These drugs interfere with the release of progeny virus from infected cells and are effective against all influenza strains. Resistance to neuraminidase inhibitors is quite rare. In terms of biological role, catalyzes the removal of terminal sialic acid residues from viral and cellular glycoconjugates. Cleaves off the terminal sialic acids on the glycosylated HA during virus budding to facilitate virus release. Additionally helps virus spread through the circulation by further removing sialic acids from the cell surface. These cleavages prevent self-aggregation and ensure the efficient spread of the progeny virus from cell to cell. Otherwise, infection would be limited to one round of replication. Described as a receptor-destroying enzyme because it cleaves a terminal sialic acid from the cellular receptors. May facilitate viral invasion of the upper airways by cleaving the sialic acid moieties on the mucin of the airway epithelial cells. Likely to plays a role in the budding process through its association with lipid rafts during intracellular transport. May additionally display a raft-association independent effect on budding. Plays a role in the determination of host range restriction on replication and virulence. Sialidase activity in late endosome/lysosome traffic seems to enhance virus replication. The protein is Neuraminidase of Influenza A virus (strain A/Equine/New Market/1979 H3N8).